Consider the following 727-residue polypeptide: ABC transporter G family member 6 (727 aa).

Residues 68–333 (LSFTDLTYSV…FAEFGHPIPE (266 aa)) enclose the ABC transporter domain. Residue 126-133 (GASGSGKS) participates in ATP binding. An ABC transmembrane type-2 domain is found at 421–631 (VELAVLAKRS…PYEAVLLNEF (211 aa)). Transmembrane regions (helical) follow at residues 440–460 (LFGIRLGAVLVTGFILATMFW), 475–495 (CFAFAMSTTFYTCADALPVFL), 517–537 (LSHSLVALPSLIILSLAFAAI), 560–580 (ASFWAGSSFVTFLSGVVPHVM), 581–601 (LGYTIVVAILAYFLLFSGFFI), and 700–720 (LWVTVAWGFFFRILFYFSLLL).

It belongs to the ABC transporter superfamily. ABCG family. Eye pigment precursor importer (TC 3.A.1.204) subfamily.

The protein resides in the membrane. This Arabidopsis thaliana (Mouse-ear cress) protein is ABC transporter G family member 6 (ABCG6).